The sequence spans 305 residues: tRNA uridine(34) hydroxylase (305 aa).

Residues A125–S219 form the Rhodanese domain. The Cysteine persulfide intermediate role is filled by C179.

Belongs to the TrhO family.

It catalyses the reaction uridine(34) in tRNA + AH2 + O2 = 5-hydroxyuridine(34) in tRNA + A + H2O. Its function is as follows. Catalyzes oxygen-dependent 5-hydroxyuridine (ho5U) modification at position 34 in tRNAs. This Brucella anthropi (strain ATCC 49188 / DSM 6882 / CCUG 24695 / JCM 21032 / LMG 3331 / NBRC 15819 / NCTC 12168 / Alc 37) (Ochrobactrum anthropi) protein is tRNA uridine(34) hydroxylase.